A 407-amino-acid chain; its full sequence is tRNA (guanine-N(7)-)-methyltransferase non-catalytic subunit wuho (407 aa).

WD repeat units follow at residues 83–124 (AIEV…ARLL), 171–210 (GHLS…DIHS), and 214–252 (GHKE…ELLI).

This sequence belongs to the WD repeat TRM82 family. As to quaternary structure, forms a heterodimer with the catalytic subunit Mettl1. Interacts with mei-P26 and weakly interacts with bgcn; required for the function or formation of the mei-P26-bgcn-bam-sxl complex. Interacts with nanos; may be involved in mei-P26-dependent derepression of the BMP signaling pathway. Interacts with Myc; the interaction may be mediated by mei-P26 and may be involved in the regulation of ribosome biogenesis. As to expression, in testis, it is present at high level in hub cells, a niche for germline stem cells of testis. Ubiquitously expressed in all testicular cells throughout spermatogenesis. Ubiquitously expressed in all germline and somatic cells of the ovary.

The protein localises to the nucleus. It is found in the cytoplasm. The protein operates within tRNA modification; N(7)-methylguanine-tRNA biosynthesis. Its function is as follows. Required for the Mettl1-dependent formation of N(7)-methylguanine at position 46 (m7G46) in tRNA. In the Mettl1-wuho methyltransferase complex, it is required to stabilize and induce conformational changes of the catalytic subunit. Required for binding of nanos mRNA and repression of translation by the mei-P26-bgcn-bam-sxl complex. May cooperate with mei-P26 and nanos to derepress the BMP signaling pathway. May cooperate with mei-P26 to suppress expression of a subset of microRNAs. May cooperate with mei-P26 to regulate bam expression levels in germline cells during gametogenesis. Required to promote mitosis to meiosis transition during gametogenesis. May regulate germline cell division in part by regulating ribosome biogenesis. The chain is tRNA (guanine-N(7)-)-methyltransferase non-catalytic subunit wuho from Drosophila ananassae (Fruit fly).